A 338-amino-acid chain; its full sequence is Glycerol-3-phosphate dehydrogenase [NAD(P)+] (338 aa).

Residues S14, Y15, H35, and K109 each coordinate NADPH. Sn-glycerol 3-phosphate is bound by residues K109, G138, and T140. An NADPH-binding site is contributed by A142. Positions 194, 247, 257, 258, and 259 each coordinate sn-glycerol 3-phosphate. Catalysis depends on K194, which acts as the Proton acceptor. Residue R258 coordinates NADPH. 2 residues coordinate NADPH: V282 and E284.

The protein belongs to the NAD-dependent glycerol-3-phosphate dehydrogenase family.

It localises to the cytoplasm. The catalysed reaction is sn-glycerol 3-phosphate + NAD(+) = dihydroxyacetone phosphate + NADH + H(+). The enzyme catalyses sn-glycerol 3-phosphate + NADP(+) = dihydroxyacetone phosphate + NADPH + H(+). It participates in membrane lipid metabolism; glycerophospholipid metabolism. In terms of biological role, catalyzes the reduction of the glycolytic intermediate dihydroxyacetone phosphate (DHAP) to sn-glycerol 3-phosphate (G3P), the key precursor for phospholipid synthesis. In Shewanella sp. (strain MR-4), this protein is Glycerol-3-phosphate dehydrogenase [NAD(P)+].